A 228-amino-acid polypeptide reads, in one-letter code: Urease accessory protein UreF (228 aa).

Belongs to the UreF family. As to quaternary structure, ureD, UreF and UreG form a complex that acts as a GTP-hydrolysis-dependent molecular chaperone, activating the urease apoprotein by helping to assemble the nickel containing metallocenter of UreC. The UreE protein probably delivers the nickel.

The protein localises to the cytoplasm. Functionally, required for maturation of urease via the functional incorporation of the urease nickel metallocenter. The protein is Urease accessory protein UreF of Prochlorococcus marinus (strain MIT 9215).